A 106-amino-acid polypeptide reads, in one-letter code: ATP-dependent Clp protease adapter protein ClpS (106 aa).

The protein belongs to the ClpS family. In terms of assembly, binds to the N-terminal domain of the chaperone ClpA.

Functionally, involved in the modulation of the specificity of the ClpAP-mediated ATP-dependent protein degradation. This is ATP-dependent Clp protease adapter protein ClpS from Aliivibrio salmonicida (strain LFI1238) (Vibrio salmonicida (strain LFI1238)).